The chain runs to 269 residues: Dihydropteroate synthase (269 aa).

The Pterin-binding domain occupies 14–261; sequence TYIMGILNFT…DVLENSRAAK (248 aa). Asparagine 21 provides a ligand contact to Mg(2+). (7,8-dihydropterin-6-yl)methyl diphosphate-binding positions include threonine 61, aspartate 95, asparagine 114, aspartate 178, lysine 214, and 249–251; that span reads RVH.

It belongs to the DHPS family. Mg(2+) serves as cofactor.

The enzyme catalyses (7,8-dihydropterin-6-yl)methyl diphosphate + 4-aminobenzoate = 7,8-dihydropteroate + diphosphate. It functions in the pathway cofactor biosynthesis; tetrahydrofolate biosynthesis; 7,8-dihydrofolate from 2-amino-4-hydroxy-6-hydroxymethyl-7,8-dihydropteridine diphosphate and 4-aminobenzoate: step 1/2. Catalyzes the condensation of para-aminobenzoate (pABA) with 6-hydroxymethyl-7,8-dihydropterin diphosphate (DHPt-PP) to form 7,8-dihydropteroate (H2Pte), the immediate precursor of folate derivatives. The protein is Dihydropteroate synthase of Clostridium beijerinckii (strain ATCC 51743 / NCIMB 8052) (Clostridium acetobutylicum).